The sequence spans 341 residues: UDP-3-O-(3-hydroxymyristoyl)glucosamine N-acyltransferase (341 aa).

Residue histidine 239 is the Proton acceptor of the active site.

Belongs to the transferase hexapeptide repeat family. LpxD subfamily. As to quaternary structure, homotrimer.

It carries out the reaction a UDP-3-O-[(3R)-3-hydroxyacyl]-alpha-D-glucosamine + a (3R)-hydroxyacyl-[ACP] = a UDP-2-N,3-O-bis[(3R)-3-hydroxyacyl]-alpha-D-glucosamine + holo-[ACP] + H(+). The catalysed reaction is UDP-3-O-[(3R)-3-hydroxytetradecanoyl]-alpha-D-glucosamine + (3R)-hydroxytetradecanoyl-[ACP] = UDP-2-N,3-O-bis[(3R)-3-hydroxytetradecanoyl]-alpha-D-glucosamine + holo-[ACP] + H(+). Its pathway is glycolipid biosynthesis; lipid IV(A) biosynthesis; lipid IV(A) from (3R)-3-hydroxytetradecanoyl-[acyl-carrier-protein] and UDP-N-acetyl-alpha-D-glucosamine: step 3/6. Functionally, catalyzes the N-acylation of UDP-3-O-(hydroxytetradecanoyl)glucosamine using 3-hydroxytetradecanoyl-ACP as the acyl donor. Is involved in the biosynthesis of lipid A, a phosphorylated glycolipid that anchors the lipopolysaccharide to the outer membrane of the cell. This chain is UDP-3-O-(3-hydroxymyristoyl)glucosamine N-acyltransferase, found in Escherichia coli O157:H7.